The following is a 719-amino-acid chain: DNA ligase (719 aa).

NAD(+) is bound by residues 42 to 46, 92 to 93, and E126; these read DAAYD and SL. The N6-AMP-lysine intermediate role is filled by K128. NAD(+) is bound by residues R149, E185, K301, and K325. Positions 430, 433, 448, and 454 each coordinate Zn(2+). The BRCT domain maps to 640 to 719; the sequence is ATGSPVEGKT…DDWFKLVGED (80 aa).

This sequence belongs to the NAD-dependent DNA ligase family. LigA subfamily. The cofactor is Mg(2+). Mn(2+) serves as cofactor.

The catalysed reaction is NAD(+) + (deoxyribonucleotide)n-3'-hydroxyl + 5'-phospho-(deoxyribonucleotide)m = (deoxyribonucleotide)n+m + AMP + beta-nicotinamide D-nucleotide.. Its function is as follows. DNA ligase that catalyzes the formation of phosphodiester linkages between 5'-phosphoryl and 3'-hydroxyl groups in double-stranded DNA using NAD as a coenzyme and as the energy source for the reaction. It is essential for DNA replication and repair of damaged DNA. This is DNA ligase from Brucella melitensis biotype 2 (strain ATCC 23457).